Reading from the N-terminus, the 315-residue chain is Small ribosomal subunit biogenesis GTPase RsgA (315 aa).

The CP-type G domain occupies 79-243 (LSKESHILGA…LIDTPGIKGF (165 aa)). GTP is bound by residues 128 to 131 (NKID) and 182 to 190 (GHSGVGKSS). Positions 267, 272, 274, and 280 each coordinate Zn(2+).

This sequence belongs to the TRAFAC class YlqF/YawG GTPase family. RsgA subfamily. Monomer. Associates with 30S ribosomal subunit, binds 16S rRNA. Zn(2+) is required as a cofactor.

The protein resides in the cytoplasm. In terms of biological role, one of several proteins that assist in the late maturation steps of the functional core of the 30S ribosomal subunit. Helps release RbfA from mature subunits. May play a role in the assembly of ribosomal proteins into the subunit. Circularly permuted GTPase that catalyzes slow GTP hydrolysis, GTPase activity is stimulated by the 30S ribosomal subunit. This chain is Small ribosomal subunit biogenesis GTPase RsgA, found in Porphyromonas gingivalis (strain ATCC BAA-308 / W83).